The primary structure comprises 200 residues: Interleukin 17-like protein (200 aa).

An N-terminal signal peptide occupies residues 1-26 (MGNFFLFAMTLVVCSVIVLLTGVADS). N-linked (GlcNAc...) asparagine glycosylation is present at Asn46. 2 disulfide bridges follow: Cys122–Cys175 and Cys127–Cys177. A glycan (N-linked (GlcNAc...) asparagine) is linked at Asn192.

This sequence belongs to the IL-17 family. As to expression, expressed in several tissues including hemocytes, gills, mantle, adductor muscle, labial palps, digestive glands and heart with highest levels in gills and lowest levels in adductor muscle and heart.

The protein localises to the secreted. The chain is Interleukin 17-like protein from Magallana gigas (Pacific oyster).